The primary structure comprises 1017 residues: Protein translocase subunit SecA 1 (1017 aa).

Residues Gln-143, 161-165 (GEGKT), and Asp-661 contribute to the ATP site. A disordered region spans residues 978–999 (GLNDDDEPLPAQPITTEQKPGR). Positions 1003, 1005, 1014, and 1015 each coordinate Zn(2+).

Belongs to the SecA family. In terms of assembly, monomer and homodimer. Part of the essential Sec protein translocation apparatus which comprises SecA, SecYEG and auxiliary proteins SecDF. Other proteins may also be involved. The cofactor is Zn(2+).

Its subcellular location is the cell inner membrane. The protein localises to the cytoplasm. It carries out the reaction ATP + H2O + cellular proteinSide 1 = ADP + phosphate + cellular proteinSide 2.. Part of the Sec protein translocase complex. Interacts with the SecYEG preprotein conducting channel. Has a central role in coupling the hydrolysis of ATP to the transfer of proteins into and across the cell membrane, serving as an ATP-driven molecular motor driving the stepwise translocation of polypeptide chains across the membrane. The sequence is that of Protein translocase subunit SecA 1 from Chlorobium chlorochromatii (strain CaD3).